We begin with the raw amino-acid sequence, 524 residues long: Protein-export membrane protein SecD (524 aa).

The next 6 helical transmembrane spans lie at 10–30, 366–386, 389–409, 420–442, 465–485, and 487–507; these read VIFLVAAILLSTFALFSPTMG, KFDSLITGIVAVLAVAGVVFI, GKPQVALPMIVTGLSEVYILL, DLSVIAGFIAVIGTGVDDLIIIA, FWVIGAAAATTIIAMSPLAVL, and LGDLQGFAIFTILGVIVGVLV.

This sequence belongs to the SecD/SecF family. SecD subfamily. In terms of assembly, part of the protein translocation apparatus. Forms a homodimer and complexes with SecF.

It is found in the cell membrane. Functionally, involved in protein export. This chain is Protein-export membrane protein SecD, found in Haloferax volcanii (strain ATCC 29605 / DSM 3757 / JCM 8879 / NBRC 14742 / NCIMB 2012 / VKM B-1768 / DS2) (Halobacterium volcanii).